The primary structure comprises 282 residues: Secretory carrier-associated membrane protein 3 (282 aa).

A disordered region spans residues 1–36 (MAGKHGRNGFEDDDVNPFAGGSVPPANNSRLPPLSH). Topologically, residues 1–117 (MAGKHGRNGF…EIPIHLQRMQ (117 aa)) are cytoplasmic. Residues 48–92 (LDSSKDLKKKEKELQAMEAELNKRERELKRKEEAAAQAGIVIEDK) adopt a coiled-coil conformation. Helical transmembrane passes span 118–138 (YLAFSSFLGLAACLFWNIIAT), 148–168 (VIIWLLAIIYFISGVPGAYVL), 185–205 (FGWFFLFYLIHIIFCVWAAVA), and 230–250 (IVGIFYFVGFGLFCLESLLSI). Over 251-282 (GVIQQVYMYFRGSGKAAEMKREAARGALSSAF) the chain is Cytoplasmic.

It belongs to the SCAMP family.

The protein localises to the cell membrane. The protein resides in the cytoplasmic vesicle. It localises to the secretory vesicle membrane. In terms of biological role, probably involved in membrane trafficking. The protein is Secretory carrier-associated membrane protein 3 (SCAMP3) of Oryza sativa subsp. japonica (Rice).